The following is a 279-amino-acid chain: MKVISSIQELRDQLRGQNRTAFVPTMGNLHEGHLSLMRLARQHGDPVVASIFVNRLQFGPNEDFDKYPRTLQDDIEKLQQNNVYVLFAPTERDMYPEPQEYRVLPPDDLGGILEGEFRPGFFAGVCTVVTKLMSCVQPRVAVFGKKDYQQLMIVRRMCQQLALPVEIIAAETVRDEDGLALSSRNRYLTTDERKEAPELAKTLQRVRDSVLGGERDLGKLEQHAHTHLAERGWVPDYIAIRRRANLIAPSAAELEAGEPLVVLAAAKLGATRLIDNLEI.

26 to 33 (MGNLHEGH) contacts ATP. Catalysis depends on His-33, which acts as the Proton donor. Gln-57 is a (R)-pantoate binding site. Gln-57 serves as a coordination point for beta-alanine. An ATP-binding site is contributed by 144–147 (GKKD). A (R)-pantoate-binding site is contributed by Gln-150. Residues Val-173 and 181–184 (LSSR) each bind ATP.

Belongs to the pantothenate synthetase family. In terms of assembly, homodimer.

The protein resides in the cytoplasm. It carries out the reaction (R)-pantoate + beta-alanine + ATP = (R)-pantothenate + AMP + diphosphate + H(+). The protein operates within cofactor biosynthesis; (R)-pantothenate biosynthesis; (R)-pantothenate from (R)-pantoate and beta-alanine: step 1/1. Functionally, catalyzes the condensation of pantoate with beta-alanine in an ATP-dependent reaction via a pantoyl-adenylate intermediate. In Burkholderia cenocepacia (strain HI2424), this protein is Pantothenate synthetase.